Consider the following 126-residue polypeptide: Profilin-1B (126 aa).

Residues 2–36 (SWQTYVDTNLVGTGAVTQAAILGLDGNTWATSAGF) form an actin binding region. Position 104 is an N6,N6,N6-trimethyllysine (lysine 104).

This sequence belongs to the profilin family. In terms of assembly, occurs in many kinds of cells as a complex with monomeric actin in a 1:1 ratio.

The protein resides in the cytoplasm. It is found in the cytoskeleton. Functionally, binds to actin and affects the structure of the cytoskeleton. At high concentrations, profilin prevents the polymerization of actin, whereas it enhances it at low concentrations. By binding to PIP2, it inhibits the formation of IP3 and DG. This chain is Profilin-1B, found in Acanthamoeba castellanii (Amoeba).